The chain runs to 460 residues: 3-isopropylmalate dehydratase large subunit (460 aa).

Cys338, Cys398, and Cys401 together coordinate [4Fe-4S] cluster.

Belongs to the aconitase/IPM isomerase family. LeuC type 1 subfamily. Heterodimer of LeuC and LeuD. [4Fe-4S] cluster serves as cofactor.

It carries out the reaction (2R,3S)-3-isopropylmalate = (2S)-2-isopropylmalate. It functions in the pathway amino-acid biosynthesis; L-leucine biosynthesis; L-leucine from 3-methyl-2-oxobutanoate: step 2/4. Its function is as follows. Catalyzes the isomerization between 2-isopropylmalate and 3-isopropylmalate, via the formation of 2-isopropylmaleate. In Streptococcus sanguinis (strain SK36), this protein is 3-isopropylmalate dehydratase large subunit.